Here is a 628-residue protein sequence, read N- to C-terminus: tRNA(Thr) (cytosine(32)-N(3))-methyltransferase (628 aa).

A compositionally biased stretch (basic and acidic residues) spans methionine 1–glycine 18. Disordered regions lie at residues methionine 1–alanine 106, alanine 124–leucine 269, and asparagine 302–serine 331. Positions valine 22–leucine 31 are enriched in polar residues. The span at lysine 32–glutamine 42 shows a compositional bias: basic and acidic residues. Residues aspartate 53–proline 62 show a composition bias toward acidic residues. Serine 93 is subject to Phosphoserine. The segment covering glutamate 132–glutamate 146 has biased composition (acidic residues). A Phosphothreonine modification is found at threonine 150. The segment covering proline 173–isoleucine 186 has biased composition (acidic residues). Positions asparagine 196–glycine 207 are enriched in polar residues. The span at lysine 215–asparagine 230 shows a compositional bias: basic residues. Polar residues predominate over residues glycine 231–aspartate 240. Phosphoserine occurs at positions 321 and 326. Threonine 347 carries the phosphothreonine modification. Positions 399, 403, 441, 466, 492, 493, and 515 each coordinate S-adenosyl-L-methionine.

It belongs to the methyltransferase superfamily. METL family. Interacts with SES1.

The protein localises to the cytoplasm. It is found in the cytoskeleton. It carries out the reaction cytidine(32) in tRNA(Thr) + S-adenosyl-L-methionine = N(3)-methylcytidine(32) in tRNA(Thr) + S-adenosyl-L-homocysteine + H(+). The catalysed reaction is cytidine(32) in tRNA(Ser) + S-adenosyl-L-methionine = N(3)-methylcytidine(32) in tRNA(Ser) + S-adenosyl-L-homocysteine + H(+). Functionally, S-adenosyl-L-methionine-dependent methyltransferase that mediates N(3)-methylcytidine modification of residue 32 of the tRNA anticodon loop of tRNA(Thr) and tRNA(Ser). N(3)-methylcytidine methylation of tRNA(Thr) requires the N6-threonylcarbamoylation of tRNA (t6A37) by the EKC/KEOPS complex as prerequisite. N(3)-methylcytidine methylation of tRNA(Ser) requires the formation of N(6)-dimethylallyladenosine(37) (i6A37) by MOD5 as prerequisite. Methylation of tRNA(Ser) is also stimulated by SES1. Binds F-actin and shows weak F-actin cross-linking activity. The chain is tRNA(Thr) (cytosine(32)-N(3))-methyltransferase (ABP140) from Saccharomyces cerevisiae (strain ATCC 204508 / S288c) (Baker's yeast).